The primary structure comprises 515 residues: 2-isopropylmalate synthase (515 aa).

In terms of domain architecture, Pyruvate carboxyltransferase spans 4–266 (IKFFDTTLRD…ETRLNLQEIK (263 aa)). The Mn(2+) site is built by Asp13, His201, His203, and Asn237. A regulatory domain region spans residues 391 to 515 (QLSSIQVQYG…RAENEKVTTP (125 aa)).

The protein belongs to the alpha-IPM synthase/homocitrate synthase family. LeuA type 1 subfamily. Homodimer. The cofactor is Mn(2+).

It localises to the cytoplasm. The catalysed reaction is 3-methyl-2-oxobutanoate + acetyl-CoA + H2O = (2S)-2-isopropylmalate + CoA + H(+). It functions in the pathway amino-acid biosynthesis; L-leucine biosynthesis; L-leucine from 3-methyl-2-oxobutanoate: step 1/4. In terms of biological role, catalyzes the condensation of the acetyl group of acetyl-CoA with 3-methyl-2-oxobutanoate (2-ketoisovalerate) to form 3-carboxy-3-hydroxy-4-methylpentanoate (2-isopropylmalate). This chain is 2-isopropylmalate synthase, found in Geobacillus thermodenitrificans (strain NG80-2).